Reading from the N-terminus, the 501-residue chain is Cytochrome P450 2J1 (501 aa).

Cys447 contributes to the heme binding site.

The protein belongs to the cytochrome P450 family. The cofactor is heme. As to expression, small intestine.

The protein localises to the endoplasmic reticulum membrane. Its subcellular location is the microsome membrane. The catalysed reaction is an organic molecule + reduced [NADPH--hemoprotein reductase] + O2 = an alcohol + oxidized [NADPH--hemoprotein reductase] + H2O + H(+). Functionally, catalyzes the N-demethylation of benzphetamine to formaldehyde. The sequence is that of Cytochrome P450 2J1 (CYP2J1) from Oryctolagus cuniculus (Rabbit).